The following is a 117-amino-acid chain: Large ribosomal subunit protein uL18 (117 aa).

The protein belongs to the universal ribosomal protein uL18 family. As to quaternary structure, part of the 50S ribosomal subunit; part of the 5S rRNA/L5/L18/L25 subcomplex. Contacts the 5S and 23S rRNAs.

This is one of the proteins that bind and probably mediate the attachment of the 5S RNA into the large ribosomal subunit, where it forms part of the central protuberance. The polypeptide is Large ribosomal subunit protein uL18 (Mannheimia succiniciproducens (strain KCTC 0769BP / MBEL55E)).